Reading from the N-terminus, the 688-residue chain is UvrABC system protein B (688 aa).

The Helicase ATP-binding domain occupies 31–414; sequence GRITAGETDV…LGIADGVVEQ (384 aa). Residue 44-51 participates in ATP binding; that stretch reads GATGTGKS. A Beta-hairpin motif is present at residues 97–120; the sequence is YYDYYQPEAYVPQTDTFIEKDSSI. Residues 434–600 form the Helicase C-terminal domain; sequence QIDDLLEEIR…PLRKRIADIT (167 aa). The interval 614–633 is disordered; sequence LAGRDQKRKSPTPSLRSGGI. The region spanning 642-677 is the UVR domain; the sequence is ESLIADLNAQMLAAAGELKFELAARLRDELSDLKRD.

The protein belongs to the UvrB family. As to quaternary structure, forms a heterotetramer with UvrA during the search for lesions. Interacts with UvrC in an incision complex.

It is found in the cytoplasm. In terms of biological role, the UvrABC repair system catalyzes the recognition and processing of DNA lesions. A damage recognition complex composed of 2 UvrA and 2 UvrB subunits scans DNA for abnormalities. Upon binding of the UvrA(2)B(2) complex to a putative damaged site, the DNA wraps around one UvrB monomer. DNA wrap is dependent on ATP binding by UvrB and probably causes local melting of the DNA helix, facilitating insertion of UvrB beta-hairpin between the DNA strands. Then UvrB probes one DNA strand for the presence of a lesion. If a lesion is found the UvrA subunits dissociate and the UvrB-DNA preincision complex is formed. This complex is subsequently bound by UvrC and the second UvrB is released. If no lesion is found, the DNA wraps around the other UvrB subunit that will check the other stand for damage. The chain is UvrABC system protein B from Leifsonia xyli subsp. xyli (strain CTCB07).